A 431-amino-acid polypeptide reads, in one-letter code: D-tagatose-1,6-bisphosphate aldolase subunit KbaZ (431 aa).

This sequence belongs to the GatZ/KbaZ family. KbaZ subfamily. Forms a complex with KbaY.

The protein operates within carbohydrate metabolism; D-tagatose 6-phosphate degradation; D-glyceraldehyde 3-phosphate and glycerone phosphate from D-tagatose 6-phosphate: step 2/2. Functionally, component of the tagatose-1,6-bisphosphate aldolase KbaYZ that is required for full activity and stability of the Y subunit. Could have a chaperone-like function for the proper and stable folding of KbaY. When expressed alone, KbaZ does not show any aldolase activity. The sequence is that of D-tagatose-1,6-bisphosphate aldolase subunit KbaZ from Citrobacter koseri (strain ATCC BAA-895 / CDC 4225-83 / SGSC4696).